A 90-amino-acid chain; its full sequence is Probable small nuclear ribonucleoprotein E (90 aa).

The 76-residue stretch at 14 to 89 (VNLIFRYLQN…ITLIHAAAQE (76 aa)) folds into the Sm domain.

Belongs to the snRNP Sm proteins family. Core component of the spliceosomal U1, U2, U4 and U5 small nuclear ribonucleoproteins (snRNPs), the building blocks of the spliceosome.

It is found in the nucleus. The protein localises to the cytoplasm. Its subcellular location is the cytosol. Functionally, plays a role in pre-mRNA splicing as a core component of the spliceosomal U1, U2, U4 and U5 small nuclear ribonucleoproteins (snRNPs), the building blocks of the spliceosome. This chain is Probable small nuclear ribonucleoprotein E (snr-6), found in Caenorhabditis briggsae.